The following is a 311-amino-acid chain: MAKLAEEMNPEGSRYQLLLSCPSGLSPSQVSVDFSKSHDRIPRQDPGLEDSISQVWEQRSQGNSSLFNGQKFRYGGYCLDDDDGSTNEVPHVCLRLGLTDYRTFVGTNLSSLWEKFLVTSEDDSVRCRHTSSPLGNGAVIETSDKKIIVLRRSNNVGEFPGHYVFPGGHPEPTAVGIDYHQLENNVQTGEVLNKKVTQEMFDSIICEVVEETGIPASSLSSPLFIGISRRELNVRPAMFFYLKCSHHSDDIQRLYSSAEDGFESTQLHTVSLDELKMMTSRMPGCHHGGFALYELMLQRLKNTKETSLIAT.

The Nudix hydrolase domain maps to Ser-131–Gln-298. A Nudix box motif is present at residues Leu-192–Gly-213. Residues Glu-207 and Glu-211 each coordinate Mg(2+).

Belongs to the Nudix hydrolase family. Requires Mg(2+) as cofactor. The cofactor is Mn(2+). Expressed in roots, stems and leaves.

Functionally, probably mediates the hydrolysis of some nucleoside diphosphate derivatives. The protein is Nudix hydrolase 9 (NUDT9) of Arabidopsis thaliana (Mouse-ear cress).